We begin with the raw amino-acid sequence, 161 residues long: Small ribosomal subunit protein uS9 (161 aa).

A disordered region spans residues 1–38 (MAQTITSLADLKQGPGAEPAGLSAEPQEPKLDKEGRAY). Positions 27–38 (QEPKLDKEGRAY) are enriched in basic and acidic residues.

The protein belongs to the universal ribosomal protein uS9 family.

This is Small ribosomal subunit protein uS9 from Rhodospirillum centenum (strain ATCC 51521 / SW).